A 263-amino-acid polypeptide reads, in one-letter code: Undecaprenyl-diphosphatase 2 (263 aa).

Transmembrane regions (helical) follow at residues 15 to 37 (GLTE…LLGF), 42 to 62 (AKVF…VIFW), 83 to 103 (LHII…HSAI), 106 to 126 (VLFG…LMIV), 142 to 162 (ITYK…WPGF), 183 to 203 (AEYT…LDLI), 216 to 236 (LFAT…VSFL), and 242 to 262 (VKLT…YFFI).

This sequence belongs to the UppP family.

It is found in the cell membrane. The catalysed reaction is di-trans,octa-cis-undecaprenyl diphosphate + H2O = di-trans,octa-cis-undecaprenyl phosphate + phosphate + H(+). Catalyzes the dephosphorylation of undecaprenyl diphosphate (UPP). Confers resistance to bacitracin. This chain is Undecaprenyl-diphosphatase 2, found in Bacillus cereus (strain ATCC 10987 / NRS 248).